Reading from the N-terminus, the 129-residue chain is D-ribose pyranase (129 aa).

Catalysis depends on H20, which acts as the Proton donor. Substrate is bound by residues D28, H96, and 118–120 (YAN).

This sequence belongs to the RbsD / FucU family. RbsD subfamily. As to quaternary structure, homodecamer.

The protein localises to the cytoplasm. The catalysed reaction is beta-D-ribopyranose = beta-D-ribofuranose. Its pathway is carbohydrate metabolism; D-ribose degradation; D-ribose 5-phosphate from beta-D-ribopyranose: step 1/2. Functionally, catalyzes the interconversion of beta-pyran and beta-furan forms of D-ribose. The polypeptide is D-ribose pyranase (Staphylococcus haemolyticus (strain JCSC1435)).